The following is a 591-amino-acid chain: Aspartate--tRNA ligase (591 aa).

Residue Glu171 participates in L-aspartate binding. Residues 195–198 (QLFK) form an aspartate region. Arg217 is an L-aspartate binding site. ATP-binding positions include 217–219 (RDE) and Gln226. An L-aspartate-binding site is contributed by His448. Glu482 lines the ATP pocket. Arg489 provides a ligand contact to L-aspartate. 534–537 (GLDR) is a binding site for ATP.

This sequence belongs to the class-II aminoacyl-tRNA synthetase family. Type 1 subfamily. As to quaternary structure, homodimer.

It is found in the cytoplasm. The catalysed reaction is tRNA(Asp) + L-aspartate + ATP = L-aspartyl-tRNA(Asp) + AMP + diphosphate. In terms of biological role, catalyzes the attachment of L-aspartate to tRNA(Asp) in a two-step reaction: L-aspartate is first activated by ATP to form Asp-AMP and then transferred to the acceptor end of tRNA(Asp). This Vibrio cholerae serotype O1 (strain ATCC 39541 / Classical Ogawa 395 / O395) protein is Aspartate--tRNA ligase.